The sequence spans 195 residues: MQRTSRLKRELSLLAAEPPPGITCWQDGDRMEDLRAQILGGANTPYEKGVFKLEVHIPERYPFEPPQIRFLTPIYHPNIDSAGRICLDVLKLPPKGAWRPSLNIATLLTSIQQLMAEPNPDDPLMADISSEFKYNKPVFFKNARQWTEKHARQKTDEEGMPGSLPEVGGSEGPSAAQKRKAGQLSSGGKRFCPDV.

One can recognise a UBC core domain in the interval Q2–R152. The Glycyl thioester intermediate role is filled by C86. A Glycyl lysine isopeptide (Lys-Gly) (interchain with G-Cter in ubiquitin) cross-link involves residue K91. A compositionally biased stretch (basic and acidic residues) spans W146–E157. The interval W146 to V195 is disordered. K180 participates in a covalent cross-link: Glycyl lysine isopeptide (Lys-Gly) (interchain with G-Cter in ubiquitin). K189 participates in a covalent cross-link: Glycyl lysine isopeptide (Lys-Gly) (interchain with G-Cter in SUMO2).

The protein belongs to the ubiquitin-conjugating enzyme family. As to quaternary structure, interacts with FANCL and BRCA1. Auto-ubiquitinated. Effects of auto-monoubiquitination at Lys-91 and Lys-180 are unclear.

It localises to the nucleus. It catalyses the reaction S-ubiquitinyl-[E1 ubiquitin-activating enzyme]-L-cysteine + [E2 ubiquitin-conjugating enzyme]-L-cysteine = [E1 ubiquitin-activating enzyme]-L-cysteine + S-ubiquitinyl-[E2 ubiquitin-conjugating enzyme]-L-cysteine.. The protein operates within protein modification; protein ubiquitination. In terms of biological role, accepts ubiquitin from the E1 complex and catalyzes its covalent attachment to other proteins. Catalyzes monoubiquitination. Involved in mitomycin-C (MMC)-induced DNA repair: acts as a specific E2 ubiquitin-conjugating enzyme for the Fanconi anemia complex by associating with E3 ubiquitin-protein ligase FANCL and catalyzing monoubiquitination of FANCD2, a key step in the DNA damage pathway. Also mediates monoubiquitination of FANCL and FANCI. May contribute to ubiquitination and degradation of BRCA1. In vitro able to promote polyubiquitination using all 7 ubiquitin Lys residues, but may prefer 'Lys-11'-, 'Lys-27'-, 'Lys-48'- and 'Lys-63'-linked polyubiquitination. The polypeptide is Ubiquitin-conjugating enzyme E2 T (UBE2T) (Bos taurus (Bovine)).